The primary structure comprises 580 residues: Laccase-20 (580 aa).

Residues 1-23 (MVASLLCTVAVAVLAVAAVGGEA) form the signal peptide. 2 consecutive Plastocyanin-like domains span residues 31–147 (VVHE…PRDG) and 156–310 (KDVP…YTSA). Residues Asn-36 and Asn-42 are each glycosylated (N-linked (GlcNAc...) asparagine). 2 residues coordinate Cu cation: His-81 and His-83. Asn-115 carries an N-linked (GlcNAc...) asparagine glycan. Cu cation-binding residues include His-126 and His-128. N-linked (GlcNAc...) asparagine glycosylation is found at Asn-200, Asn-339, Asn-392, Asn-429, and Asn-460. Residues 419-561 (DFPVRPPRPY…ATAFIVEDGP (143 aa)) enclose the Plastocyanin-like 3 domain. Cu cation contacts are provided by Asn-478, His-481, His-483, His-540, Cys-541, His-542, His-546, and Met-551. The interval 560–580 (GPTPETSLPPPPPEFKRCDAS) is disordered.

This sequence belongs to the multicopper oxidase family. Cu cation is required as a cofactor.

The protein localises to the secreted. It is found in the extracellular space. It localises to the apoplast. It catalyses the reaction 4 hydroquinone + O2 = 4 benzosemiquinone + 2 H2O. Its function is as follows. Lignin degradation and detoxification of lignin-derived products. The chain is Laccase-20 (LAC20) from Oryza sativa subsp. indica (Rice).